Consider the following 674-residue polypeptide: Sodium/myo-inositol cotransporter 2 (674 aa).

The Extracellular portion of the chain corresponds to 1–27; it reads MESSPSSPQPTQSDPLAVFPQRTLEPA. The chain crosses the membrane as a helical span at residues 28 to 48; it reads DIAVLVLYFLFVLAVGLWSTV. Over 49–56 the chain is Cytoplasmic; it reads KTRRDTVK. Residues 57–77 traverse the membrane as a helical segment; sequence GYFLAGGDMVWWPVGASLFAS. At 78-102 the chain is on the extracellular side; the sequence is NVGSGHFVGLAGSGAAAGLSVTAYE. A helical membrane pass occupies residues 103 to 123; sequence FNGIFSVLMLAWIFLPIYIAG. Residues 124–140 are Cytoplasmic-facing; sequence QVTTMPEYLRKRFGGSR. The helical transmembrane segment at 141-161 threads the bilayer; it reads IPITLAVLYLFIYIFTKISVD. Over 162–180 the chain is Extracellular; that stretch reads MYAGAIFIQQSLHLNLYLA. A helical membrane pass occupies residues 181–201; the sequence is IVGLLAITALYTIAGGLAAVI. Residues 202 to 208 lie on the Cytoplasmic side of the membrane; that stretch reads YTDALQT. A helical membrane pass occupies residues 209–229; sequence LIMLIGALTLMGYSFAAVGGM. The Extracellular portion of the chain corresponds to 230–272; that stretch reads EGLKEKYFLALASNRSGNSSCGLPREDAFHIFRDPLTSDLPWP. Residues 273 to 293 traverse the membrane as a helical segment; it reads GILFGMSIPSLWYWCTDQVIV. The Cytoplasmic segment spans residues 294–308; it reads QRTLAAKNLSHAKGG. Residues 309–329 form a helical membrane-spanning segment; the sequence is SLMAAYLKVLPLFIMVFPGMV. At 330–374 the chain is on the extracellular side; sequence SRVLFPDQVACADPEICQKVCSNPAGCSDIAYPKLVLELLPMGLR. The chain crosses the membrane as a helical span at residues 375 to 397; the sequence is GLMMAVMVAALMSSLTSIFNSAS. Residues 398-418 are Cytoplasmic-facing; sequence TIFTMDLWNHLRPRASERELM. The helical transmembrane segment at 419-439 threads the bilayer; sequence IVGRVFVLLLVLVSILWIPVV. At 440-446 the chain is on the extracellular side; that stretch reads QASQGGQ. Residues 447 to 467 form a helical membrane-spanning segment; it reads LFIYIQSISSYLQPPVAVVFI. Over 468 to 479 the chain is Cytoplasmic; the sequence is MGCFWKRTNEKG. A helical transmembrane segment spans residues 480-500; it reads AFSGLILGLLLGLVRLVLDFI. At 501 to 518 the chain is on the extracellular side; that stretch reads YPQPRCDQPDERPAVVRD. A helical transmembrane segment spans residues 519-539; it reads VHYLYFSMILSSVTLVTVSTV. At 540–653 the chain is on the cytoplasmic side; it reads SWCTAPPTQE…SLEEIPLVKT (114 aa). Residues 654 to 674 traverse the membrane as a helical segment; sequence LLDINLIVCISCAIFLWGYFA.

Belongs to the sodium:solute symporter (SSF) (TC 2.A.21) family.

It localises to the membrane. It is found in the apical cell membrane. The catalysed reaction is myo-inositol(out) + 2 Na(+)(out) = myo-inositol(in) + 2 Na(+)(in). It catalyses the reaction 1D-chiro-inositol(out) + 2 Na(+)(out) = 1D-chiro-inositol(in) + 2 Na(+)(in). It carries out the reaction D-glucose(out) + 2 Na(+)(out) = D-glucose(in) + 2 Na(+)(in). The enzyme catalyses D-xylose(out) + 2 Na(+)(out) = D-xylose(in) + 2 Na(+)(in). With respect to regulation, MI transport activity inhibited by D-chiro-inositol (DCI), phlorizin (Pz) and sodium (Na(+)). Insulin increases D-chiro-inositol uptake. Functionally, involved in the sodium-dependent cotransport of myo-inositol (MI) with a Na(+):MI stoichiometry of 2:1. Exclusively responsible for apical MI transport and absorption in intestine. Can also transport D-chiro-inositol (DCI) but not L-fucose. Exhibits stereospecific cotransport of both D-glucose and D-xylose. May induce apoptosis through the TNF-alpha, PDCD1 pathway. May play a role in the regulation of MI concentration in serum, involving reabsorption in at least the proximal tubule of the kidney. The polypeptide is Sodium/myo-inositol cotransporter 2 (Sus scrofa (Pig)).